We begin with the raw amino-acid sequence, 275 residues long: UDP-Gal:alpha-D-GlcNAc-diphosphoundecaprenol beta-1,3-galactosyltransferase (275 aa).

It belongs to the glycosyltransferase 2 family. It depends on Mn(2+) as a cofactor.

It localises to the cell inner membrane. The catalysed reaction is N-acetyl-alpha-D-glucosaminyl-di-trans,octa-cis-undecaprenyl diphosphate + UDP-alpha-D-galactose = beta-D-Gal-(1-&gt;3)-alpha-D-GlcNAc-di-trans,octa-cis-undecaprenyl diphosphate + UDP + H(+). It functions in the pathway bacterial outer membrane biogenesis; LPS O-antigen biosynthesis. Its function is as follows. Catalyzes the addition of Gal, the second sugar moiety of the O7-antigen repeating unit, to GlcNAc-pyrophosphate-undecaprenol. This is UDP-Gal:alpha-D-GlcNAc-diphosphoundecaprenol beta-1,3-galactosyltransferase (wbbD) from Escherichia coli.